A 501-amino-acid chain; its full sequence is Cobyric acid synthase (501 aa).

In terms of domain architecture, GATase cobBQ-type spans 251 to 446 (NIDIAIIRLS…LHGIFDSEEF (196 aa)). Cys-332 serves as the catalytic Nucleophile. His-438 is an active-site residue.

The protein belongs to the CobB/CobQ family. CobQ subfamily.

Its pathway is cofactor biosynthesis; adenosylcobalamin biosynthesis. Its function is as follows. Catalyzes amidations at positions B, D, E, and G on adenosylcobyrinic A,C-diamide. NH(2) groups are provided by glutamine, and one molecule of ATP is hydrogenolyzed for each amidation. In Clostridium botulinum (strain Alaska E43 / Type E3), this protein is Cobyric acid synthase.